Here is a 114-residue protein sequence, read N- to C-terminus: Putative pterin-4-alpha-carbinolamine dehydratase (114 aa).

It belongs to the pterin-4-alpha-carbinolamine dehydratase family.

The catalysed reaction is (4aS,6R)-4a-hydroxy-L-erythro-5,6,7,8-tetrahydrobiopterin = (6R)-L-erythro-6,7-dihydrobiopterin + H2O. This chain is Putative pterin-4-alpha-carbinolamine dehydratase, found in Chlorobium luteolum (strain DSM 273 / BCRC 81028 / 2530) (Pelodictyon luteolum).